The chain runs to 155 residues: Protein SprT-like (155 aa).

One can recognise a SprT-like domain in the interval 7-145 (QRHMEEVSLQ…GSCGGKLIQI (139 aa)). Position 67 (His-67) interacts with Zn(2+). Residue Glu-68 is part of the active site. His-71 contacts Zn(2+).

Belongs to the SprT family. Zn(2+) is required as a cofactor.

It is found in the cytoplasm. The protein is Protein SprT-like of Listeria monocytogenes serotype 4a (strain HCC23).